A 365-amino-acid chain; its full sequence is Class I histocompatibility antigen, Gogo-A*0401 alpha chain (365 aa).

The signal sequence occupies residues 1-24; that stretch reads MAVMAPRTLVLLLSGALALTQTWA. The segment at 25-114 is alpha-1; the sequence is GSHSMRYFYT…LRGYYNQSED (90 aa). At 25–308 the chain is on the extracellular side; that stretch reads GSHSMRYFYT…EPSSQPTIPI (284 aa). Residue N110 is glycosylated (N-linked (GlcNAc...) asparagine). Residues 115 to 206 are alpha-2; the sequence is GSHTIQRMYG…ENGKETLQLT (92 aa). Disulfide bonds link C125–C188 and C227–C283. Positions 207–298 are alpha-3; it reads DAPKTHMTHH…GLPKPLTLRW (92 aa). The region spanning 209 to 295 is the Ig-like C1-type domain; sequence PKTHMTHHPV…QHEGLPKPLT (87 aa). A connecting peptide region spans residues 299–308; that stretch reads EPSSQPTIPI. A helical membrane pass occupies residues 309-332; that stretch reads VGIIAGLVLFGAVIAGAVVAAVRW. The Cytoplasmic segment spans residues 333–365; the sequence is RRKSSDRKGGSYSQAASSDSAQGSDVSLTACKV. Residues 338-365 form a disordered region; that stretch reads DRKGGSYSQAASSDSAQGSDVSLTACKV. A compositionally biased stretch (low complexity) spans 342-359; it reads GSYSQAASSDSAQGSDVS. S343 is modified (phosphoserine). Residue Y344 is modified to Phosphotyrosine. Residues S345, S349, S350, S352, S356, and S359 each carry the phosphoserine modification.

Belongs to the MHC class I family. As to quaternary structure, heterodimer of an alpha chain and a beta chain (beta-2-microglobulin).

Its subcellular location is the membrane. Functionally, involved in the presentation of foreign antigens to the immune system. This Gorilla gorilla gorilla (Western lowland gorilla) protein is Class I histocompatibility antigen, Gogo-A*0401 alpha chain.